Reading from the N-terminus, the 140-residue chain is Gonadotropin subunit beta-2 (140 aa).

Positions Met-1–Ser-23 are cleaved as a signal peptide. Cystine bridges form between Cys-29/Cys-77, Cys-43/Cys-92, Cys-46/Cys-130, Cys-54/Cys-108, Cys-58/Cys-110, and Cys-113/Cys-120. An N-linked (GlcNAc...) asparagine glycan is attached at Asn-33.

Belongs to the glycoprotein hormones subunit beta family. Heterodimer of an alpha and a beta chain.

It is found in the secreted. Its function is as follows. Involved in gametogenesis and steroidogenesis. The chain is Gonadotropin subunit beta-2 (cgbb) from Ictalurus punctatus (Channel catfish).